Here is a 449-residue protein sequence, read N- to C-terminus: MSPESKKLFNIIILGVAFMFMFTAFQTCGNVAQTVIRSLNRTDFHGSGYTSMAIIYGVFSASNLITPSVVAIVGPQLSMFASGLFYSMYIAVFIQPFPWSFYTASVFIGIAAAVLWTAQGNCLTINSDEHSIGRNSGIFWALLQSSLFFGNLYIYFAWQGKTQISESDRRTVFIALTVISLVGTVLFFLIRKPDSENVLGEDESSDDQDMEVNESAQNNLTKAVDAFKKSFKLCVTKEMLLLSITTAYTGLELTFFSGVYGTCIGATNKFGAEEKSLIGLSGIFIGIGEILGGSLFGLLSKNNRFGRNPVVLLGILVHFIAFYLIFLNMPGDAPIAPVKGTDSSAYIKSSKEVAILCSFLLGLGDSCFNTQLLSILGFLYSEDSAPAFAIFKFVQSICAAVAFFYSNYLLLHWQLLVMVIFGFFGTISFFTVEWEAAAFVARGSDYRSI.

A helical membrane pass occupies residues 8-28 (LFNIIILGVAFMFMFTAFQTC). N-linked (GlcNAc...) asparagine glycosylation is present at asparagine 40. Helical transmembrane passes span 53–73 (AIIY…VAIV), 74–94 (GPQL…AVFI), 96–116 (PFPW…AVLW), 138–158 (IFWA…YFAW), and 170–190 (RTVF…FFLI). Phosphoserine is present on serine 204. 6 helical membrane-spanning segments follow: residues 239–259 (MLLL…FSGV), 277–297 (LIGL…SLFG), 309–329 (PVVL…FLNM), 359–379 (FLLG…LGFL), 385–405 (APAF…AFFY), and 410–430 (LLHW…ISFF).

It belongs to the unc-93 family.

The protein localises to the membrane. The polypeptide is UNC93-like protein MFSD11 (MFSD11) (Homo sapiens (Human)).